The following is a 174-amino-acid chain: Large ribosomal subunit protein uL16 (174 aa).

This sequence belongs to the universal ribosomal protein uL16 family.

This Archaeoglobus fulgidus (strain ATCC 49558 / DSM 4304 / JCM 9628 / NBRC 100126 / VC-16) protein is Large ribosomal subunit protein uL16.